The primary structure comprises 126 residues: MADLAKIVEDLSSLTVLEAAELAKLLEEKWGVSAAAAVAVAAGPAGGGAAAPAAEEQTEFTVVLASAGDKKIEVIKEVRAITGLGLKEAKDLVEGAPKPVKESVAKDEAEKLKAQLEKAGAKVELK.

The protein belongs to the bacterial ribosomal protein bL12 family. As to quaternary structure, homodimer. Part of the ribosomal stalk of the 50S ribosomal subunit. Forms a multimeric L10(L12)X complex, where L10 forms an elongated spine to which 2 to 4 L12 dimers bind in a sequential fashion. Binds GTP-bound translation factors.

Functionally, forms part of the ribosomal stalk which helps the ribosome interact with GTP-bound translation factors. Is thus essential for accurate translation. The chain is Large ribosomal subunit protein bL12 from Methylorubrum populi (strain ATCC BAA-705 / NCIMB 13946 / BJ001) (Methylobacterium populi).